We begin with the raw amino-acid sequence, 422 residues long: Serine--tRNA ligase (422 aa).

229–231 lines the L-serine pocket; sequence TAE. 260–262 serves as a coordination point for ATP; that stretch reads RKE. An L-serine-binding site is contributed by Glu283. 347-350 contributes to the ATP binding site; the sequence is EISS. Ser383 provides a ligand contact to L-serine.

The protein belongs to the class-II aminoacyl-tRNA synthetase family. Type-1 seryl-tRNA synthetase subfamily. As to quaternary structure, homodimer. The tRNA molecule binds across the dimer.

The protein localises to the cytoplasm. The enzyme catalyses tRNA(Ser) + L-serine + ATP = L-seryl-tRNA(Ser) + AMP + diphosphate + H(+). It catalyses the reaction tRNA(Sec) + L-serine + ATP = L-seryl-tRNA(Sec) + AMP + diphosphate + H(+). The protein operates within aminoacyl-tRNA biosynthesis; selenocysteinyl-tRNA(Sec) biosynthesis; L-seryl-tRNA(Sec) from L-serine and tRNA(Sec): step 1/1. In terms of biological role, catalyzes the attachment of serine to tRNA(Ser). Is also able to aminoacylate tRNA(Sec) with serine, to form the misacylated tRNA L-seryl-tRNA(Sec), which will be further converted into selenocysteinyl-tRNA(Sec). The sequence is that of Serine--tRNA ligase from Geobacter sp. (strain M21).